A 977-amino-acid polypeptide reads, in one-letter code: Serine/threonine-protein kinase N2 (977 aa).

REM-1 domains are found at residues Asn-24 to Val-100, Asp-114 to Ile-194, and Asp-200 to Lys-280. Residues Pro-298–Phe-468 enclose the C2 domain. Disordered regions lie at residues Gly-342 to Ser-381 and Ala-531 to Ser-576. The segment covering Glu-358–Leu-378 has biased composition (polar residues). The 260-residue stretch at Phe-650 to Phe-909 folds into the Protein kinase domain. Residues Leu-656–Val-664 and Lys-679 each bind ATP. Residue Asp-775 is the Proton acceptor of the active site. In terms of domain architecture, AGC-kinase C-terminal spans Arg-910–Cys-977.

This sequence belongs to the protein kinase superfamily. AGC Ser/Thr protein kinase family. PKC subfamily. Post-translationally, autophosphorylated. Phosphorylated. Proteolytically cleaved.

The protein resides in the cytoplasm. The protein localises to the nucleus. It localises to the membrane. It is found in the cell projection. Its subcellular location is the lamellipodium. The protein resides in the cytoskeleton. The protein localises to the cleavage furrow. It localises to the midbody. It is found in the cell junction. The enzyme catalyses L-seryl-[protein] + ATP = O-phospho-L-seryl-[protein] + ADP + H(+). The catalysed reaction is L-threonyl-[protein] + ATP = O-phospho-L-threonyl-[protein] + ADP + H(+). With respect to regulation, kinase activity is activated upon binding to GTP-bound Rho/Rac GTPases. Activated by lipids, particularly cardiolipin and to a lesser extent by other acidic phospholipids and unsaturated fatty acids. Two specific sites, Thr-809 (activation loop of the kinase domain) and Thr-951 (turn motif), may be needed to be phosphorylated for its full activation. In terms of biological role, pkc-related serine/threonine-protein kinase and Rho/Rac effector protein that participates in specific signal transduction responses in the cell. May play a role in the regulation of cell cycle progression, actin cytoskeleton assembly, cell migration, cell adhesion and transcription activation signaling processes. This is Serine/threonine-protein kinase N2 (pkn2) from Danio rerio (Zebrafish).